The primary structure comprises 418 residues: Tol-Pal system protein TolB (418 aa).

An N-terminal signal peptide occupies residues 1–21; that stretch reads MKLFVQLVLFISLFIPYSTKA.

The protein belongs to the TolB family. As to quaternary structure, the Tol-Pal system is composed of five core proteins: the inner membrane proteins TolA, TolQ and TolR, the periplasmic protein TolB and the outer membrane protein Pal. They form a network linking the inner and outer membranes and the peptidoglycan layer.

Its subcellular location is the periplasm. In terms of biological role, part of the Tol-Pal system, which plays a role in outer membrane invagination during cell division and is important for maintaining outer membrane integrity. This is Tol-Pal system protein TolB from Wolbachia pipientis subsp. Culex pipiens (strain wPip).